A 510-amino-acid chain; its full sequence is Histidine ammonia-lyase (510 aa).

The segment at residues 143 to 145 is a cross-link (5-imidazolinone (Ala-Gly)); it reads ASG. Position 144 is a 2,3-didehydroalanine (Ser) (S144).

Belongs to the PAL/histidase family. Contains an active site 4-methylidene-imidazol-5-one (MIO), which is formed autocatalytically by cyclization and dehydration of residues Ala-Ser-Gly.

Its subcellular location is the cytoplasm. It catalyses the reaction L-histidine = trans-urocanate + NH4(+). The protein operates within amino-acid degradation; L-histidine degradation into L-glutamate; N-formimidoyl-L-glutamate from L-histidine: step 1/3. This Psychromonas ingrahamii (strain DSM 17664 / CCUG 51855 / 37) protein is Histidine ammonia-lyase.